Reading from the N-terminus, the 347-residue chain is Protein phosphatase 2C homolog 1 (347 aa).

A disordered region spans residues Met1–Glu41. The span at Asn32–Glu41 shows a compositional bias: basic and acidic residues. Residues Leu71–Leu323 enclose the PPM-type phosphatase domain. Residues Asp109, Gly110, Asp275, and Asp314 each contribute to the Mn(2+) site.

Belongs to the PP2C family. As to quaternary structure, monomer. Requires Mg(2+) as cofactor. The cofactor is Mn(2+).

It carries out the reaction O-phospho-L-seryl-[protein] + H2O = L-seryl-[protein] + phosphate. The catalysed reaction is O-phospho-L-threonyl-[protein] + H2O = L-threonyl-[protein] + phosphate. Functionally, serine and threonine phosphatase. Has a specialized role in the heat shock response. May be responsible for the dephosphorylation of hsp90. This Schizosaccharomyces pombe (strain 972 / ATCC 24843) (Fission yeast) protein is Protein phosphatase 2C homolog 1 (ptc1).